A 129-amino-acid chain; its full sequence is Trefoil factor 2 (129 aa).

Residues 1 to 23 form the signal peptide; that stretch reads MGPRGLQLLAVLLALGLCAPAGA. Pyrrolidone carboxylic acid is present on Gln24. P-type domains lie at 29 to 73 and 79 to 122; these read CQCS…FHPL and EQCV…FFPI. 7 cysteine pairs are disulfide-bonded: Cys29-Cys127, Cys31-Cys58, Cys42-Cys57, Cys52-Cys69, Cys81-Cys107, Cys91-Cys106, and Cys101-Cys118.

It is found in the secreted. Functionally, inhibits gastrointestinal motility and gastric acid secretion. Could function as a structural component of gastric mucus, possibly by stabilizing glycoproteins in the mucus gel through interactions with carbohydrate side chains. This chain is Trefoil factor 2 (TFF2), found in Canis lupus familiaris (Dog).